The sequence spans 168 residues: Cyclic pyranopterin monophosphate synthase (168 aa).

Substrate-binding positions include 81–83 (LCH) and 117–118 (ME). Asp-132 is an active-site residue.

It belongs to the MoaC family. Homohexamer; trimer of dimers.

The enzyme catalyses (8S)-3',8-cyclo-7,8-dihydroguanosine 5'-triphosphate = cyclic pyranopterin phosphate + diphosphate. The protein operates within cofactor biosynthesis; molybdopterin biosynthesis. Its function is as follows. Catalyzes the conversion of (8S)-3',8-cyclo-7,8-dihydroguanosine 5'-triphosphate to cyclic pyranopterin monophosphate (cPMP). The polypeptide is Cyclic pyranopterin monophosphate synthase (Deinococcus radiodurans (strain ATCC 13939 / DSM 20539 / JCM 16871 / CCUG 27074 / LMG 4051 / NBRC 15346 / NCIMB 9279 / VKM B-1422 / R1)).